The primary structure comprises 385 residues: Serine/threonine-protein kinase H2 (385 aa).

Residues tyrosine 63 to valine 320 enclose the Protein kinase domain. ATP contacts are provided by residues isoleucine 69–valine 77 and lysine 92. The interval glutamine 342–histidine 367 is disordered. Over residues alanine 344 to serine 359 the composition is skewed to low complexity.

Belongs to the protein kinase superfamily. CAMK Ser/Thr protein kinase family.

The catalysed reaction is L-seryl-[protein] + ATP = O-phospho-L-seryl-[protein] + ADP + H(+). The enzyme catalyses L-threonyl-[protein] + ATP = O-phospho-L-threonyl-[protein] + ADP + H(+). The polypeptide is Serine/threonine-protein kinase H2 (PSKH2) (Homo sapiens (Human)).